Here is a 158-residue protein sequence, read N- to C-terminus: Endoribonuclease YbeY (158 aa).

Zn(2+) is bound by residues His-119, His-123, and Asp-129.

Belongs to the endoribonuclease YbeY family. The cofactor is Zn(2+).

Its subcellular location is the cytoplasm. Functionally, single strand-specific metallo-endoribonuclease involved in late-stage 70S ribosome quality control and in maturation of the 3' terminus of the 16S rRNA. This chain is Endoribonuclease YbeY, found in Chlamydia felis (strain Fe/C-56) (Chlamydophila felis).